A 348-amino-acid chain; its full sequence is Dihydroorotase (348 aa).

His17 and His19 together coordinate Zn(2+). Substrate is bound by residues 19 to 21 (HLR) and Asn45. Residues Lys103, His140, and His178 each coordinate Zn(2+). An N6-carboxylysine modification is found at Lys103. A substrate-binding site is contributed by His140. Leu223 contributes to the substrate binding site. A Zn(2+)-binding site is contributed by Asp251. The active site involves Asp251. 2 residues coordinate substrate: His255 and Ala267.

It belongs to the metallo-dependent hydrolases superfamily. DHOase family. Class II DHOase subfamily. In terms of assembly, homodimer. Zn(2+) serves as cofactor.

It carries out the reaction (S)-dihydroorotate + H2O = N-carbamoyl-L-aspartate + H(+). Its pathway is pyrimidine metabolism; UMP biosynthesis via de novo pathway; (S)-dihydroorotate from bicarbonate: step 3/3. Catalyzes the reversible cyclization of carbamoyl aspartate to dihydroorotate. The sequence is that of Dihydroorotase from Salmonella typhimurium (strain LT2 / SGSC1412 / ATCC 700720).